Here is a 220-residue protein sequence, read N- to C-terminus: Probable nicotinate-nucleotide adenylyltransferase (220 aa).

Belongs to the NadD family.

It carries out the reaction nicotinate beta-D-ribonucleotide + ATP + H(+) = deamido-NAD(+) + diphosphate. Its pathway is cofactor biosynthesis; NAD(+) biosynthesis; deamido-NAD(+) from nicotinate D-ribonucleotide: step 1/1. Functionally, catalyzes the reversible adenylation of nicotinate mononucleotide (NaMN) to nicotinic acid adenine dinucleotide (NaAD). The chain is Probable nicotinate-nucleotide adenylyltransferase from Saccharophagus degradans (strain 2-40 / ATCC 43961 / DSM 17024).